A 450-amino-acid chain; its full sequence is Gastrin/cholecystokinin type B receptor (450 aa).

The Extracellular portion of the chain corresponds to 1-57 (MELLKLNSSVQGPGPGSGSSLCHPGVSLLNSSSAGNLSCEPPRIRGTGTRELELAIR). Residues Asn-7, Asn-30, and Asn-36 are each glycosylated (N-linked (GlcNAc...) asparagine). The chain crosses the membrane as a helical span at residues 58–79 (ITLYAVIFLMSIGGNMLIIVVL). Topologically, residues 80 to 87 (GLSRRLRT) are cytoplasmic. The helical transmembrane segment at 88–109 (VTNAFLLSLAVSDLLLAVACMP) threads the bilayer. Topologically, residues 110–131 (FTLLPNLMGTFIFGTVICKAVS) are extracellular. Cysteines 127 and 205 form a disulfide. The chain crosses the membrane as a helical span at residues 132–150 (YLMGVSVSVSTLNLVAIAL). The Cytoplasmic segment spans residues 151–170 (ERYSAICRPLQARVWQTRSH). A helical transmembrane segment spans residues 171-189 (AARVILATWLLSGLLMVPY). Residues 190 to 219 (PVYTVVQPVGPRVLQCMHRWPSARVRQTWS) are Extracellular-facing. Residues 220–242 (VLLLMLLFFIPGVVMAVAYGLIS) traverse the membrane as a helical segment. The Cytoplasmic segment spans residues 243 to 336 (RELYLGLRFD…KLLAKKRVVR (94 aa)). The disordered stretch occupies residues 258 to 277 (DTQSRVRNQGGLPGGTAPGP). A helical transmembrane segment spans residues 337 to 358 (MLLVIVLLFFLCWLPIYSANTW). At 359-376 (CAFDGPGAHRALSGAPIS) the chain is on the extracellular side. Residues 377 to 397 (FIHLLSYASACVNPLVYCFMH) form a helical membrane-spanning segment. The Cytoplasmic portion of the chain corresponds to 398 to 450 (RRFRQACLDTCARCCPRPPRARPRPLPDEDPPTPSIASLSRLSYTTISTLGPG). Cys-411 carries the S-palmitoyl cysteine lipid modification.

The protein belongs to the G-protein coupled receptor 1 family. In terms of tissue distribution, stomach and brain.

The protein resides in the cell membrane. Receptor for gastrin and cholecystokinin. The CCK-B receptors occur throughout the central nervous system where they modulate anxiety, analgesia, arousal, and neuroleptic activity. This receptor mediates its action by association with G proteins that activate a phosphatidylinositol-calcium second messenger system. This is Gastrin/cholecystokinin type B receptor (CCKBR) from Mastomys natalensis (African soft-furred rat).